Consider the following 190-residue polypeptide: Peptidyl-tRNA hydrolase (190 aa).

A tRNA-binding site is contributed by tyrosine 14. Catalysis depends on histidine 19, which acts as the Proton acceptor. TRNA is bound by residues tyrosine 64, asparagine 66, and asparagine 113.

The protein belongs to the PTH family. As to quaternary structure, monomer.

Its subcellular location is the cytoplasm. It catalyses the reaction an N-acyl-L-alpha-aminoacyl-tRNA + H2O = an N-acyl-L-amino acid + a tRNA + H(+). In terms of biological role, hydrolyzes ribosome-free peptidyl-tRNAs (with 1 or more amino acids incorporated), which drop off the ribosome during protein synthesis, or as a result of ribosome stalling. Its function is as follows. Catalyzes the release of premature peptidyl moieties from peptidyl-tRNA molecules trapped in stalled 50S ribosomal subunits, and thus maintains levels of free tRNAs and 50S ribosomes. The polypeptide is Peptidyl-tRNA hydrolase (Gemmatimonas aurantiaca (strain DSM 14586 / JCM 11422 / NBRC 100505 / T-27)).